Consider the following 350-residue polypeptide: Zinc finger protein 367 (350 aa).

The disordered stretch occupies residues 104 to 151; the sequence is SGLRGRGAPPPAASASAAASGGEDEEEASSPDSGHLKDGIRRGRPRAD. Residues 137-151 are compositionally biased toward basic and acidic residues; the sequence is GHLKDGIRRGRPRAD. 2 consecutive C2H2-type zinc fingers follow at residues 167–189 and 195–219; these read IRCNICNRVFPREKSLQAHKRTH and YLCDYPDCGKAFVQSGQLKTHQRLH. The disordered stretch occupies residues 290 to 327; that stretch reads KGKLVQKADQEQQDPLEYLQSDEEDDEKRGAQRRLQEQ. Positions 308-342 form a coiled coil; the sequence is LQSDEEDDEKRGAQRRLQEQRERLHGALALIELAN. Ser310 is modified (phosphoserine). Residues 316–327 show a composition bias toward basic and acidic residues; it reads EKRGAQRRLQEQ.

It belongs to the krueppel C2H2-type zinc-finger protein family.

It localises to the nucleus. Its function is as follows. Transcriptional activator. Isoform 1 may be involved in transcriptional activation of erythroid genes. The protein is Zinc finger protein 367 (ZNF367) of Homo sapiens (Human).